A 143-amino-acid chain; its full sequence is Ribonuclease VapC33 (143 aa).

2 residues coordinate Mg(2+): Asp-5 and Asp-108.

Belongs to the PINc/VapC protein family. Requires Mg(2+) as cofactor.

Functionally, toxic component of a type II toxin-antitoxin (TA) system. An RNase. Its toxic effect is neutralized by coexpression with cognate antitoxin VapB33. This Mycobacterium tuberculosis (strain CDC 1551 / Oshkosh) protein is Ribonuclease VapC33.